Consider the following 388-residue polypeptide: MSEQIVTPDTAALTVPNKDAKINLLDLNRQQMREFFKNMGEKPFRADQVMKWMYHYCCDDFDEMTDINKVLRSKLKEVAEIRAPEVVEEQRSTDGTIKWAIAVGDQRVETVYIPEEDRATLCVSSQVGCALECKFCSTAQQGFNRNLRVSEIIGQVWRAAKIVGAVKTTGVRPITNVVMMGMGEPLLNLNNVVPAMEIMLDDFGFGLSKRRVTLSTSGVVPALDKLGDMIDVALAISLHAPNDTIRDEIVPINKKYNIETFLNSVRGYISKSNANQGRVTIEYVMLDHVNDGTEHAHELAALLKDTPCKINLIPWNPFPGAPYGRSSNSRIDRFSKVLMEYGFTTIVRKTRGDDIDAACGQLAGDVIDRTKRTLRKRMQGEAIDVKAV.

Glu-109 (proton acceptor) is an active-site residue. The Radical SAM core domain maps to 115-354 (EEDRATLCVS…TIVRKTRGDD (240 aa)). A disulfide bridge connects residues Cys-122 and Cys-359. Residues Cys-129, Cys-133, and Cys-136 each contribute to the [4Fe-4S] cluster site. Residues 183–184 (GE), Ser-215, 237–239 (SLH), and Asn-316 contribute to the S-adenosyl-L-methionine site. Cys-359 serves as the catalytic S-methylcysteine intermediate.

It belongs to the radical SAM superfamily. RlmN family. [4Fe-4S] cluster is required as a cofactor.

It localises to the cytoplasm. The catalysed reaction is adenosine(2503) in 23S rRNA + 2 reduced [2Fe-2S]-[ferredoxin] + 2 S-adenosyl-L-methionine = 2-methyladenosine(2503) in 23S rRNA + 5'-deoxyadenosine + L-methionine + 2 oxidized [2Fe-2S]-[ferredoxin] + S-adenosyl-L-homocysteine. It catalyses the reaction adenosine(37) in tRNA + 2 reduced [2Fe-2S]-[ferredoxin] + 2 S-adenosyl-L-methionine = 2-methyladenosine(37) in tRNA + 5'-deoxyadenosine + L-methionine + 2 oxidized [2Fe-2S]-[ferredoxin] + S-adenosyl-L-homocysteine. In terms of biological role, specifically methylates position 2 of adenine 2503 in 23S rRNA and position 2 of adenine 37 in tRNAs. m2A2503 modification seems to play a crucial role in the proofreading step occurring at the peptidyl transferase center and thus would serve to optimize ribosomal fidelity. This Klebsiella pneumoniae subsp. pneumoniae (strain ATCC 700721 / MGH 78578) protein is Dual-specificity RNA methyltransferase RlmN.